A 569-amino-acid polypeptide reads, in one-letter code: uncharacterized protein (569 aa).

Residues 1-21 (MLCVMMLLFSAIASFPVSAQA) form the signal peptide. Residues 22-530 (KDQDAGILII…DHHRQTPLEK (509 aa)) are Extracellular-facing. A helical membrane pass occupies residues 531–551 (ALWILSAVVLLFVIMFVSYTF). The Cytoplasmic segment spans residues 552 to 569 (YLRATLKKRIFKERRSLG).

The protein resides in the cell membrane. This is an uncharacterized protein from Bacillus subtilis (strain 168).